We begin with the raw amino-acid sequence, 592 residues long: Coronatine-insensitive protein 1 (592 aa).

One can recognise an F-box domain in the interval Thr16 to Met57. 18 LRR repeats span residues Ala58–Gly82, Lys83–Pro102, Trp103–Arg120, Arg121–Asp154, Gly155–Lys182, Trp183–Lys210, Asp211–Val236, Gly237–Met264, Asn265–Asn283, Glu284–Glu308, Asp309–Arg332, Gly333–Arg368, Gly369–Glu393, Ser394–Asn426, Gly427–Ser456, Tyr457–Glu478, Gly479–Phe500, and Ser501–Arg524. Jasmonate is bound at residue Arg85. The jasmonate site is built by Arg348, Tyr386, and Arg409. Arg496 provides a ligand contact to jasmonate.

Component of SCF(COI1) E3 ubiquitin ligase complexes at least composed of ASK1 or ASK2, CUL1, RBX1A or RBX1B and COI1. Interacts with ASK1 and ASK2, but separately. Also binds to ASK11 and ASK12. Interacts with RBCS-1B and HDA6. SCF complexes interact with the COP9 signalosome (CSN). Interacts with TIFY10A.

The protein operates within protein modification; protein ubiquitination. Its function is as follows. Required for jasmonate-regulated plant fertility and defense processes, and for coronatine and/or other elicitors perceptions/responses. Seems to not be required for meiosis. Required for the regulation of some genes induced by wounding, but not for all. Component of SCF(COI1) E3 ubiquitin ligase complexes, which may mediate the ubiquitination and subsequent proteasomal degradation of target proteins (probably including the ribulose bisphosphate carboxylase small chain 1B RBCS-1B and the histone deacetylase HDA6). These SCF complexes play crucial roles in regulating response to jasmonate, and their interactions with the COP9 signalosome (CSN) appear to be important for their activity. Interacts with TIFY10A and inositol pentakisphosphate to form a high-affinity jasmonates coreceptor. Involved in the regulation of plant gene expression during plant-pathogen interactions with Pseudomonas syringae and Alternaria brassicicola. The protein is Coronatine-insensitive protein 1 (COI1) of Arabidopsis thaliana (Mouse-ear cress).